The sequence spans 106 residues: UPF0145 protein Dhaf_3855 (106 aa).

Belongs to the UPF0145 family.

This chain is UPF0145 protein Dhaf_3855, found in Desulfitobacterium hafniense (strain DSM 10664 / DCB-2).